The chain runs to 363 residues: Putative glutamate--cysteine ligase 2 (363 aa).

This sequence belongs to the glutamate--cysteine ligase type 2 family. YbdK subfamily.

It carries out the reaction L-cysteine + L-glutamate + ATP = gamma-L-glutamyl-L-cysteine + ADP + phosphate + H(+). ATP-dependent carboxylate-amine ligase which exhibits weak glutamate--cysteine ligase activity. The sequence is that of Putative glutamate--cysteine ligase 2 from Streptomyces coelicolor (strain ATCC BAA-471 / A3(2) / M145).